The sequence spans 272 residues: Undecaprenyl-diphosphatase (272 aa).

8 helical membrane passes run 4-24 (FEVI…FLPI), 43-63 (GGRV…CWLY), 86-106 (ISVL…VDFI), 109-129 (VLFS…IIFW), 145-165 (ITFK…IPGT), 186-206 (TEFS…FDLI), 222-242 (VGFV…VLFV), and 249-269 (VFAW…MFFN).

The protein belongs to the UppP family.

It is found in the cell inner membrane. It carries out the reaction di-trans,octa-cis-undecaprenyl diphosphate + H2O = di-trans,octa-cis-undecaprenyl phosphate + phosphate + H(+). In terms of biological role, catalyzes the dephosphorylation of undecaprenyl diphosphate (UPP). Confers resistance to bacitracin. In Acinetobacter baumannii (strain SDF), this protein is Undecaprenyl-diphosphatase.